Consider the following 543-residue polypeptide: tRNA (guanine(37)-N(1))-methyltransferase (543 aa).

The transit peptide at 1–59 (MLKSLCFVIRPAIVSRPQFRLPTIARLSLRQFQNQPQSVGFFTMAPLETRALALSPSAT) directs the protein to the mitochondrion. S-adenosyl-L-methionine contacts are provided by residues His-282, 320 to 321 (DL), and 348 to 349 (DG). The disordered stretch occupies residues 366 to 405 (DPAPPPKVSNRQRDREAKEARRKREQAKAAGQPVTETAPM). Position 431 (Asn-431) interacts with S-adenosyl-L-methionine.

It belongs to the class I-like SAM-binding methyltransferase superfamily. TRM5/TYW2 family. Monomer.

Its subcellular location is the mitochondrion matrix. The protein resides in the nucleus. The protein localises to the cytoplasm. It catalyses the reaction guanosine(37) in tRNA + S-adenosyl-L-methionine = N(1)-methylguanosine(37) in tRNA + S-adenosyl-L-homocysteine + H(+). Its function is as follows. Specifically methylates the N1 position of guanosine-37 in various cytoplasmic and mitochondrial tRNAs. Methylation is not dependent on the nature of the nucleoside 5' of the target nucleoside. This is the first step in the biosynthesis of wybutosine (yW), a modified base adjacent to the anticodon of tRNAs and required for accurate decoding. The sequence is that of tRNA (guanine(37)-N(1))-methyltransferase from Cryptococcus neoformans var. neoformans serotype D (strain JEC21 / ATCC MYA-565) (Filobasidiella neoformans).